The sequence spans 953 residues: Isoleucine--tRNA ligase (953 aa).

The 'HIGH' region signature appears at 57–67 (PYANGDIHIGH). Glu-582 is a binding site for L-isoleucyl-5'-AMP. The 'KMSKS' region motif lies at 623-627 (KMSKS). Residue Lys-626 coordinates ATP. Zn(2+)-binding residues include Cys-916, Cys-919, Cys-936, and Cys-939.

Belongs to the class-I aminoacyl-tRNA synthetase family. IleS type 1 subfamily. Monomer. Zn(2+) is required as a cofactor.

It is found in the cytoplasm. It carries out the reaction tRNA(Ile) + L-isoleucine + ATP = L-isoleucyl-tRNA(Ile) + AMP + diphosphate. Its function is as follows. Catalyzes the attachment of isoleucine to tRNA(Ile). As IleRS can inadvertently accommodate and process structurally similar amino acids such as valine, to avoid such errors it has two additional distinct tRNA(Ile)-dependent editing activities. One activity is designated as 'pretransfer' editing and involves the hydrolysis of activated Val-AMP. The other activity is designated 'posttransfer' editing and involves deacylation of mischarged Val-tRNA(Ile). The protein is Isoleucine--tRNA ligase of Bordetella pertussis (strain Tohama I / ATCC BAA-589 / NCTC 13251).